The primary structure comprises 80 residues: Defensin-like protein 44 (80 aa).

The first 27 residues, 1 to 27 (MAITKTSVTLLLLIIMAASLSNFSVLA), serve as a signal peptide directing secretion. 4 disulfide bridges follow: C40–C79, C44–C67, C53–C77, and C57–C78.

It belongs to the DEFL family.

Its subcellular location is the secreted. The polypeptide is Defensin-like protein 44 (Arabidopsis thaliana (Mouse-ear cress)).